A 343-amino-acid polypeptide reads, in one-letter code: Heat-inducible transcription repressor HrcA (343 aa).

The protein belongs to the HrcA family.

Negative regulator of class I heat shock genes (grpE-dnaK-dnaJ and groELS operons). Prevents heat-shock induction of these operons. The polypeptide is Heat-inducible transcription repressor HrcA (Thermoanaerobacter sp. (strain X514)).